The chain runs to 263 residues: Hatching enzyme 1.2 (263 aa).

The first 19 residues, 1-19 (MDIRASLSILLLLFGLSQA), serve as a signal peptide directing secretion. Residues 20-64 (SPLREFEAIFVSEPETVDITTQILETNKGSSEVLFEGDVVLPKNR) constitute a propeptide, activation peptide. The 199-residue stretch at 65–263 (NALICEDKSC…ILRINKLYGC (199 aa)) folds into the Peptidase M12A domain. Intrachain disulfides connect cysteine 69/cysteine 74, cysteine 114/cysteine 263, and cysteine 135/cysteine 155. Histidine 163 serves as a coordination point for Zn(2+). Glutamate 164 is an active-site residue. The Zn(2+) site is built by histidine 167 and histidine 173.

It depends on Zn(2+) as a cofactor. As to expression, expressed in cells of the hatching gland.

Its subcellular location is the secreted. The enzyme catalyses Hydrolysis of the inner layer of fish egg envelope. Also hydrolysis of casein and small molecule substrates such as succinyl-Leu-Leu-Val-Tyr-|-7-(4-methyl)coumarylamide.. Metalloendopeptidase which participates in the breakdown of the egg envelope at the time of hatching. Cleaves the N-terminal regions of the zona pellucia glycoproteins ZP2 and ZP3, where it specifically recognizes the peptide sequences TVQQS-|-DYLIK (major site) and KLMLK-|-APEPF (minor site). The sequence is that of Hatching enzyme 1.2 from Danio rerio (Zebrafish).